The primary structure comprises 532 residues: L-proline--[L-prolyl-carrier protein] ligase (532 aa).

The segment at 510–532 (KTDYRRLGLDAPPRPAAPLGTAR) is disordered.

It belongs to the ATP-dependent AMP-binding enzyme family.

It catalyses the reaction holo-[peptidyl-carrier protein] + L-proline + ATP = L-prolyl-[peptidyl-carrier protein] + AMP + diphosphate. In terms of biological role, involved in the biosynthesis of undecylprodigiosin. Catalyzes the conversion of L-proline to L-prolyl-AMP and the transfer of the L-prolyl group to acyl carrier protein RedO. This chain is L-proline--[L-prolyl-carrier protein] ligase, found in Streptomyces coelicolor (strain ATCC BAA-471 / A3(2) / M145).